The primary structure comprises 485 residues: Pumilio domain-containing protein 7 (485 aa).

The disordered stretch occupies residues 29 to 72 (NKTHKNKNPKPPVKLLPYRHGSNTTSSDSDSYIFNSGSGSSDAE). Over residues 49-71 (GSNTTSSDSDSYIFNSGSGSSDA) the composition is skewed to polar residues. Pumilio repeat units follow at residues 86–124 (DVLL…AVFE), 128–163 (ESTT…ELLR), 164–200 (QMID…QLIQ), 201–236 (ELST…TFFV), 237–279 (HFLS…FRIQ), 287–324 (CIVR…TIID), 326–361 (CLLR…EMME), and 370–411 (DVES…RELP). Positions 439–454 (FSSGKKIIDSVMRHGV) are RNA-binding.

Its function is as follows. RNA-binding protein that binds to the consensus sequence 5'-CUCUGUAUCUUGU-3' in mRNA 3'-UTRs and modulates mRNA expression and stability. Functions redundantly with puf-5 and puf-6 in oocyte formation and organization, early embryonic cell divisions, and repression of expression of glp-1 and other maternal mRNAs in late oogenesis. The polypeptide is Pumilio domain-containing protein 7 (Caenorhabditis elegans).